We begin with the raw amino-acid sequence, 431 residues long: Glutamate-1-semialdehyde 2,1-aminomutase (431 aa).

Lys-269 is subject to N6-(pyridoxal phosphate)lysine.

This sequence belongs to the class-III pyridoxal-phosphate-dependent aminotransferase family. HemL subfamily. Homodimer. Requires pyridoxal 5'-phosphate as cofactor.

The protein localises to the cytoplasm. It catalyses the reaction (S)-4-amino-5-oxopentanoate = 5-aminolevulinate. Its pathway is porphyrin-containing compound metabolism; protoporphyrin-IX biosynthesis; 5-aminolevulinate from L-glutamyl-tRNA(Glu): step 2/2. It functions in the pathway porphyrin-containing compound metabolism; chlorophyll biosynthesis. This chain is Glutamate-1-semialdehyde 2,1-aminomutase, found in Chlorobium limicola (strain DSM 245 / NBRC 103803 / 6330).